The sequence spans 245 residues: Pyridoxine 5'-phosphate synthase (245 aa).

Residue Asn-7 participates in 3-amino-2-oxopropyl phosphate binding. 9–10 (DH) is a binding site for 1-deoxy-D-xylulose 5-phosphate. Residue Arg-18 coordinates 3-amino-2-oxopropyl phosphate. Residue His-43 is the Proton acceptor of the active site. Residues Arg-45 and His-50 each contribute to the 1-deoxy-D-xylulose 5-phosphate site. Glu-70 serves as the catalytic Proton acceptor. Residue Thr-100 participates in 1-deoxy-D-xylulose 5-phosphate binding. Catalysis depends on His-190, which acts as the Proton donor. Residues Gly-191 and 212-213 (GH) contribute to the 3-amino-2-oxopropyl phosphate site.

Belongs to the PNP synthase family. Homooctamer; tetramer of dimers.

Its subcellular location is the cytoplasm. The enzyme catalyses 3-amino-2-oxopropyl phosphate + 1-deoxy-D-xylulose 5-phosphate = pyridoxine 5'-phosphate + phosphate + 2 H2O + H(+). The protein operates within cofactor biosynthesis; pyridoxine 5'-phosphate biosynthesis; pyridoxine 5'-phosphate from D-erythrose 4-phosphate: step 5/5. In terms of biological role, catalyzes the complicated ring closure reaction between the two acyclic compounds 1-deoxy-D-xylulose-5-phosphate (DXP) and 3-amino-2-oxopropyl phosphate (1-amino-acetone-3-phosphate or AAP) to form pyridoxine 5'-phosphate (PNP) and inorganic phosphate. In Prochlorococcus marinus (strain NATL2A), this protein is Pyridoxine 5'-phosphate synthase.